Here is a 301-residue protein sequence, read N- to C-terminus: Probable porphobilinogen deaminase (301 aa).

The residue at position 241 (C241) is an S-(dipyrrolylmethanemethyl)cysteine.

This sequence belongs to the HMBS family. Dipyrromethane serves as cofactor.

The enzyme catalyses 4 porphobilinogen + H2O = hydroxymethylbilane + 4 NH4(+). Its pathway is porphyrin-containing compound metabolism; protoporphyrin-IX biosynthesis; coproporphyrinogen-III from 5-aminolevulinate: step 2/4. Its function is as follows. Tetrapolymerization of the monopyrrole PBG into the hydroxymethylbilane pre-uroporphyrinogen in several discrete steps. The polypeptide is Probable porphobilinogen deaminase (Pyrobaculum islandicum (strain DSM 4184 / JCM 9189 / GEO3)).